The chain runs to 365 residues: Cobalt-precorrin-5B C(1)-methyltransferase (365 aa).

It belongs to the CbiD family.

It carries out the reaction Co-precorrin-5B + S-adenosyl-L-methionine = Co-precorrin-6A + S-adenosyl-L-homocysteine. It participates in cofactor biosynthesis; adenosylcobalamin biosynthesis; cob(II)yrinate a,c-diamide from sirohydrochlorin (anaerobic route): step 6/10. Catalyzes the methylation of C-1 in cobalt-precorrin-5B to form cobalt-precorrin-6A. This is Cobalt-precorrin-5B C(1)-methyltransferase from Pseudomonas fluorescens (strain ATCC BAA-477 / NRRL B-23932 / Pf-5).